The chain runs to 600 residues: UvrABC system protein C (600 aa).

One can recognise a GIY-YIG domain in the interval 15–92; the sequence is EKPGCYLMKD…IKKYQPYYNV (78 aa). Residues 197–232 enclose the UVR domain; it reads GAVKQDLTQKMEQASEQLEFERAAEIRDQLKYIEET.

Belongs to the UvrC family. Interacts with UvrB in an incision complex.

It localises to the cytoplasm. The UvrABC repair system catalyzes the recognition and processing of DNA lesions. UvrC both incises the 5' and 3' sides of the lesion. The N-terminal half is responsible for the 3' incision and the C-terminal half is responsible for the 5' incision. The protein is UvrABC system protein C of Lactobacillus helveticus (strain DPC 4571).